Consider the following 940-residue polypeptide: Isoleucine--tRNA ligase (940 aa).

Positions 58–68 match the 'HIGH' region motif; the sequence is PYANGNIHIGH. Position 563 (Glu563) interacts with L-isoleucyl-5'-AMP. The 'KMSKS' region motif lies at 604-608; that stretch reads KMSKS. ATP is bound at residue Lys607. 4 residues coordinate Zn(2+): Cys903, Cys906, Cys923, and Cys926.

The protein belongs to the class-I aminoacyl-tRNA synthetase family. IleS type 1 subfamily. Monomer. The cofactor is Zn(2+).

Its subcellular location is the cytoplasm. The enzyme catalyses tRNA(Ile) + L-isoleucine + ATP = L-isoleucyl-tRNA(Ile) + AMP + diphosphate. Catalyzes the attachment of isoleucine to tRNA(Ile). As IleRS can inadvertently accommodate and process structurally similar amino acids such as valine, to avoid such errors it has two additional distinct tRNA(Ile)-dependent editing activities. One activity is designated as 'pretransfer' editing and involves the hydrolysis of activated Val-AMP. The other activity is designated 'posttransfer' editing and involves deacylation of mischarged Val-tRNA(Ile). The chain is Isoleucine--tRNA ligase from Buchnera aphidicola subsp. Acyrthosiphon pisum (strain 5A).